The sequence spans 72 residues: Translation initiation factor IF-1 (72 aa).

Positions 1–72 constitute an S1-like domain; the sequence is MSKEDVIEVE…TRGRITWRAK (72 aa).

This sequence belongs to the IF-1 family. Component of the 30S ribosomal translation pre-initiation complex which assembles on the 30S ribosome in the order IF-2 and IF-3, IF-1 and N-formylmethionyl-tRNA(fMet); mRNA recruitment can occur at any time during PIC assembly.

It localises to the cytoplasm. Its function is as follows. One of the essential components for the initiation of protein synthesis. Stabilizes the binding of IF-2 and IF-3 on the 30S subunit to which N-formylmethionyl-tRNA(fMet) subsequently binds. Helps modulate mRNA selection, yielding the 30S pre-initiation complex (PIC). Upon addition of the 50S ribosomal subunit IF-1, IF-2 and IF-3 are released leaving the mature 70S translation initiation complex. The protein is Translation initiation factor IF-1 of Acetivibrio thermocellus (strain ATCC 27405 / DSM 1237 / JCM 9322 / NBRC 103400 / NCIMB 10682 / NRRL B-4536 / VPI 7372) (Clostridium thermocellum).